We begin with the raw amino-acid sequence, 73 residues long: Stigmurin (73 aa).

Residues 1–22 (MQIKHLITLFFLVLIVADQCSA) form the signal peptide. The residue at position 39 (K39) is a Lysine amide. The propeptide occupies 45–73 (EISAQIEQYKDLQKREAELEKLLDRLPMY).

The protein belongs to the non-disulfide-bridged peptide (NDBP) superfamily. Short antimicrobial peptide (group 4) family. Expressed by the venom gland.

It localises to the secreted. Its function is as follows. Antimicrobial peptide with activity against Gram-positive bacterial strains (S.aureus (MIC=2-140 uM), methicillin-resistant S.aureus (MRSA) (MIC=8-17 uM), S.epidermidis (MIC=1.17 uM), and the yeasts C.albicans, C.krusei, and C.glabrata (MIC=34-69 uM)). Acts by disrupting the cell membrane (observed on outer layer of the S.aureus). Is not active against Gram-negative bacteria (E.coli, E.Cloacae, P.aeruginosa), and the Gram-positive bacterium E.faecalis. Also shows toxicity against several cell lines, but possess low hemolytic activity at the highest concentration tested. Also shows antiparasitic activity against Trypanosoma cruzi by decreasing the viability of the epimastigote and trypomastigote forms of the parasite. Displays high hydroxyl radical scavenging activity (antioxidant action). In a wound infection model, the topical application of this peptide demonstrates antibacterial effects, as well as an ability to accelerate wound closure speed, which suggests the induction of tissue repair. In the model of polymicrobial sepsis, it exhibits an antibiotic effect, reducing the levels of microorganisms in the infectious focus and the inflammatory responses in the lung and cecum of septic animals. This is Stigmurin from Tityus stigmurus (Brazilian scorpion).